Here is a 363-residue protein sequence, read N- to C-terminus: tRNA/tmRNA (uracil-C(5))-methyltransferase (363 aa).

S-adenosyl-L-methionine contacts are provided by Gln-187, Tyr-215, Asn-220, Glu-236, and Asp-296. Cys-321 serves as the catalytic Nucleophile. The active-site Proton acceptor is the Glu-355.

This sequence belongs to the class I-like SAM-binding methyltransferase superfamily. RNA M5U methyltransferase family. TrmA subfamily.

The catalysed reaction is uridine(54) in tRNA + S-adenosyl-L-methionine = 5-methyluridine(54) in tRNA + S-adenosyl-L-homocysteine + H(+). It catalyses the reaction uridine(341) in tmRNA + S-adenosyl-L-methionine = 5-methyluridine(341) in tmRNA + S-adenosyl-L-homocysteine + H(+). In terms of biological role, dual-specificity methyltransferase that catalyzes the formation of 5-methyluridine at position 54 (m5U54) in all tRNAs, and that of position 341 (m5U341) in tmRNA (transfer-mRNA). The protein is tRNA/tmRNA (uracil-C(5))-methyltransferase of Pseudomonas aeruginosa (strain ATCC 15692 / DSM 22644 / CIP 104116 / JCM 14847 / LMG 12228 / 1C / PRS 101 / PAO1).